A 275-amino-acid chain; its full sequence is Diaminopimelate epimerase (275 aa).

Asparagine 20 and asparagine 63 together coordinate substrate. Cysteine 72 (proton donor) is an active-site residue. Residues 73–74 (GN), asparagine 179, and 197–198 (ER) contribute to the substrate site. The active-site Proton acceptor is cysteine 207. Position 208 to 209 (208 to 209 (GT)) interacts with substrate.

The protein belongs to the diaminopimelate epimerase family. As to quaternary structure, homodimer.

Its subcellular location is the cytoplasm. It catalyses the reaction (2S,6S)-2,6-diaminopimelate = meso-2,6-diaminopimelate. The protein operates within amino-acid biosynthesis; L-lysine biosynthesis via DAP pathway; DL-2,6-diaminopimelate from LL-2,6-diaminopimelate: step 1/1. Catalyzes the stereoinversion of LL-2,6-diaminopimelate (L,L-DAP) to meso-diaminopimelate (meso-DAP), a precursor of L-lysine and an essential component of the bacterial peptidoglycan. The sequence is that of Diaminopimelate epimerase from Chlamydia trachomatis serovar L2 (strain ATCC VR-902B / DSM 19102 / 434/Bu).